The following is a 125-amino-acid chain: Aspartate 1-decarboxylase 2 (125 aa).

The active-site Schiff-base intermediate with substrate; via pyruvic acid is serine 25. Position 25 is a pyruvic acid (Ser) (serine 25). A substrate-binding site is contributed by threonine 57. Tyrosine 58 (proton donor) is an active-site residue. 73-75 (GAA) is a substrate binding site.

It belongs to the PanD family. As to quaternary structure, heterooctamer of four alpha and four beta subunits. Requires pyruvate as cofactor. Post-translationally, is synthesized initially as an inactive proenzyme, which is activated by self-cleavage at a specific serine bond to produce a beta-subunit with a hydroxyl group at its C-terminus and an alpha-subunit with a pyruvoyl group at its N-terminus.

It localises to the cytoplasm. The catalysed reaction is L-aspartate + H(+) = beta-alanine + CO2. It functions in the pathway cofactor biosynthesis; (R)-pantothenate biosynthesis; beta-alanine from L-aspartate: step 1/1. Its function is as follows. Catalyzes the pyruvoyl-dependent decarboxylation of aspartate to produce beta-alanine. In Gloeobacter violaceus (strain ATCC 29082 / PCC 7421), this protein is Aspartate 1-decarboxylase 2.